The following is a 130-amino-acid chain: Small ribosomal subunit protein uS11 (130 aa).

The protein belongs to the universal ribosomal protein uS11 family. As to quaternary structure, part of the 30S ribosomal subunit. Interacts with proteins S7 and S18. Binds to IF-3.

Located on the platform of the 30S subunit, it bridges several disparate RNA helices of the 16S rRNA. Forms part of the Shine-Dalgarno cleft in the 70S ribosome. The chain is Small ribosomal subunit protein uS11 from Acholeplasma laidlawii (strain PG-8A).